The chain runs to 288 residues: ATP synthase gamma chain (288 aa).

It belongs to the ATPase gamma chain family. In terms of assembly, F-type ATPases have 2 components, CF(1) - the catalytic core - and CF(0) - the membrane proton channel. CF(1) has five subunits: alpha(3), beta(3), gamma(1), delta(1), epsilon(1). CF(0) has three main subunits: a, b and c.

Its subcellular location is the cell inner membrane. In terms of biological role, produces ATP from ADP in the presence of a proton gradient across the membrane. The gamma chain is believed to be important in regulating ATPase activity and the flow of protons through the CF(0) complex. The protein is ATP synthase gamma chain of Acidovorax ebreus (strain TPSY) (Diaphorobacter sp. (strain TPSY)).